Consider the following 208-residue polypeptide: Small ribosomal subunit protein uS4 (208 aa).

The S4 RNA-binding domain maps to 97–158 (TRLDNVIYRM…RAQKYLCVQE (62 aa)).

The protein belongs to the universal ribosomal protein uS4 family. In terms of assembly, part of the 30S ribosomal subunit. Contacts protein S5. The interaction surface between S4 and S5 is involved in control of translational fidelity.

In terms of biological role, one of the primary rRNA binding proteins, it binds directly to 16S rRNA where it nucleates assembly of the body of the 30S subunit. With S5 and S12 plays an important role in translational accuracy. This is Small ribosomal subunit protein uS4 from Xylella fastidiosa (strain M12).